We begin with the raw amino-acid sequence, 762 residues long: cGMP-dependent protein kinase 2 (762 aa).

A disordered region spans residues 1–25 (MGNGSVKPKHSKHPDGHSGNLTTDA). A lipid anchor (N-myristoyl glycine) is attached at Gly2. The stretch at 23–85 (TDALRNKVTE…CIQLNKLQDV (63 aa)) forms a coiled coil. 2 positions are modified to phosphoserine: Ser110 and Ser117. The segment at 117–138 (SRRGAKAGVSAEPTTRTYDLNK) is disordered. A cGMP-binding, high affinity; cAMP-binding, moderate affinity region spans residues 168 to 283 (FLKRLDPQQI…DEQYRNFLRS (116 aa)). 3',5'-cyclic AMP is bound by residues 232–235 (GELA) and 242–243 (RT). 3',5'-cyclic GMP-binding positions include 232–235 (GELA), 242–243 (RT), Lys347, 356–359 (GEKA), 366–367 (RS), Asp412, and Arg415. The interval 286 to 416 (LLKNLPEDKL…NLNRDDEKRH (131 aa)) is cGMP-binding, high affinity; cAMP-binding, low affinity. Ser431 bears the Phosphoserine mark. Positions 453–711 (LEIIATLGVG…INDIKKHRWL (259 aa)) constitute a Protein kinase domain. Residues 459-467 (LGVGGFGRV) and Lys482 each bind ATP. The active-site Proton acceptor is the Asp576. Thr609 is modified (phosphothreonine). One can recognise an AGC-kinase C-terminal domain in the interval 712–762 (NGFNWEGLKARSLPSPLQRELKGPIDHSYFDKYPPEKGMPPDELSGWDKDF). The disordered stretch occupies residues 740–762 (YFDKYPPEKGMPPDELSGWDKDF).

This sequence belongs to the protein kinase superfamily. AGC Ser/Thr protein kinase family. cGMP subfamily. In terms of assembly, interacts with GRIA1/GLUR1. Post-translationally, myristoylation mediates membrane localization. In terms of tissue distribution, highly concentrated in brain, lung and intestinal mucosa.

Its subcellular location is the apical cell membrane. The enzyme catalyses L-seryl-[protein] + ATP = O-phospho-L-seryl-[protein] + ADP + H(+). It catalyses the reaction L-threonyl-[protein] + ATP = O-phospho-L-threonyl-[protein] + ADP + H(+). Binding of cGMP results in enzyme activation. Crucial regulator of intestinal secretion and bone growth. Phosphorylates and activates CFTR on the plasma membrane. Plays a key role in intestinal secretion by regulating cGMP-dependent translocation of CFTR in jejunum. Acts downstream of NMDAR to activate the plasma membrane accumulation of GRIA1/GLUR1 in synapse and increase synaptic plasticity. Phosphorylates GRIA1/GLUR1 at Ser-863. Acts as a regulator of gene expression and activator of the extracellular signal-regulated kinases MAPK3/ERK1 and MAPK1/ERK2 in mechanically stimulated osteoblasts. Under fluid shear stress, mediates ERK activation and subsequent induction of FOS, FOSL1/FRA1, FOSL2/FRA2 and FOSB that play a key role in the osteoblast anabolic response to mechanical stimulation. This chain is cGMP-dependent protein kinase 2 (PRKG2), found in Homo sapiens (Human).